We begin with the raw amino-acid sequence, 643 residues long: UvrABC system protein C (643 aa).

Positions 25 to 104 (AEPGVYFMRD…IKQHQPHFNV (80 aa)) constitute a GIY-YIG domain. The region spanning 214–249 (SELVELLEAQMLQAAENLEFEKAAKIRDQIRGLEGL) is the UVR domain.

This sequence belongs to the UvrC family. As to quaternary structure, interacts with UvrB in an incision complex.

It localises to the cytoplasm. Its function is as follows. The UvrABC repair system catalyzes the recognition and processing of DNA lesions. UvrC both incises the 5' and 3' sides of the lesion. The N-terminal half is responsible for the 3' incision and the C-terminal half is responsible for the 5' incision. This Synechococcus elongatus (strain ATCC 33912 / PCC 7942 / FACHB-805) (Anacystis nidulans R2) protein is UvrABC system protein C.